The chain runs to 471 residues: Glutamate--tRNA ligase (471 aa).

The 'HIGH' region motif lies at 9 to 19 (PSPTGYLHVGG). Zn(2+) is bound by residues Cys98, Cys100, Cys125, and His127. The 'KMSKS' region signature appears at 237 to 241 (KLSKR). Lys240 contacts ATP.

It belongs to the class-I aminoacyl-tRNA synthetase family. Glutamate--tRNA ligase type 1 subfamily. In terms of assembly, monomer. Requires Zn(2+) as cofactor.

Its subcellular location is the cytoplasm. It carries out the reaction tRNA(Glu) + L-glutamate + ATP = L-glutamyl-tRNA(Glu) + AMP + diphosphate. In terms of biological role, catalyzes the attachment of glutamate to tRNA(Glu) in a two-step reaction: glutamate is first activated by ATP to form Glu-AMP and then transferred to the acceptor end of tRNA(Glu). The polypeptide is Glutamate--tRNA ligase (Escherichia coli O6:K15:H31 (strain 536 / UPEC)).